We begin with the raw amino-acid sequence, 473 residues long: Photosystem II CP43 reaction center protein (473 aa).

Positions 1–14 (MKTLYSLRRFYPVE) are excised as a propeptide. Thr15 carries the N-acetylthreonine modification. At Thr15 the chain carries Phosphothreonine. 5 helical membrane passes run 69–93 (LFEVAHFVPEKPMYEQGLILLPHLA), 134–155 (LLGPETLEESFPFFGYVWKDRN), 178–200 (KALYFGGVYDTWAPGGGDVRKIT), 255–275 (KPFAWARRALVWSGEAYLSYS), and 291–312 (WFNNTAYPSEFYGPTGPEASQA). [CaMn4O5] cluster is bound at residue Glu367. Residues 447-471 (RARAAAAGFEKGIDRDFEPVLSMTP) traverse the membrane as a helical segment.

This sequence belongs to the PsbB/PsbC family. PsbC subfamily. As to quaternary structure, PSII is composed of 1 copy each of membrane proteins PsbA, PsbB, PsbC, PsbD, PsbE, PsbF, PsbH, PsbI, PsbJ, PsbK, PsbL, PsbM, PsbT, PsbX, PsbY, PsbZ, Psb30/Ycf12, at least 3 peripheral proteins of the oxygen-evolving complex and a large number of cofactors. It forms dimeric complexes. Binds multiple chlorophylls and provides some of the ligands for the Ca-4Mn-5O cluster of the oxygen-evolving complex. It may also provide a ligand for a Cl- that is required for oxygen evolution. PSII binds additional chlorophylls, carotenoids and specific lipids. is required as a cofactor.

It localises to the plastid. The protein localises to the chloroplast thylakoid membrane. One of the components of the core complex of photosystem II (PSII). It binds chlorophyll and helps catalyze the primary light-induced photochemical processes of PSII. PSII is a light-driven water:plastoquinone oxidoreductase, using light energy to abstract electrons from H(2)O, generating O(2) and a proton gradient subsequently used for ATP formation. The polypeptide is Photosystem II CP43 reaction center protein (Daucus carota (Wild carrot)).